The sequence spans 270 residues: Structure-specific endonuclease subunit SLX1 (270 aa).

One can recognise a GIY-YIG domain in the interval 9-94; that stretch reads RFFGVYLLYC…PQASRRLTHV (86 aa). Residues 182-234 form an SLX1-type zinc finger; the sequence is CSLCARLLQDEEGPLCCPHPGCPLRAHIICLAEEFLQEEPGQLLPLEGHCPSC.

The protein belongs to the SLX1 family. As to quaternary structure, forms a heterodimer with SLX4. The cofactor is a divalent metal cation. Expressed in testis, colon, bone marrow, brain, thymus and to a lesser extent in heart, kidney, skeletal muscle and spleen.

It localises to the nucleus. Its function is as follows. Catalytic subunit of the SLX1-SLX4 structure-specific endonuclease that resolves DNA secondary structures generated during DNA repair and recombination. Has endonuclease activity towards branched DNA substrates, introducing single-strand cuts in duplex DNA close to junctions with ss-DNA. Has a preference for 5'-flap structures, and promotes symmetrical cleavage of static and migrating Holliday junctions (HJs). Resolves HJs by generating two pairs of ligatable, nicked duplex products. This is Structure-specific endonuclease subunit SLX1 (Slx1b) from Mus musculus (Mouse).